Reading from the N-terminus, the 747-residue chain is Histone-lysine N-methyltransferase EZH1 (747 aa).

The tract at residues 188 to 231 (DEEEDGHNDPSDGKQDDSKEDLPVTRKRKRHAIEGNKKSSKKQF) is disordered. Over residues 194 to 211 (HNDPSDGKQDDSKEDLPV) the composition is skewed to basic and acidic residues. A Glycyl lysine isopeptide (Lys-Gly) (interchain with G-Cter in SUMO2) cross-link involves residue lysine 327. The tract at residues 368–414 (VSASCSNASASAMAETKEGDSDRDTGNDWASSSSEANSRCQTPTKQK) is disordered. Residues 369–381 (SASCSNASASAMA) are compositionally biased toward low complexity. The segment covering 382–393 (ETKEGDSDRDTG) has biased composition (basic and acidic residues). The span at 395–414 (DWASSSSEANSRCQTPTKQK) shows a compositional bias: polar residues. The short motif at 491–496 (QKKKRK) is the Nuclear localization signal element. A CXC domain is found at 504-606 (CRKIQLKKDN…CKVVSCKNCS (103 aa)). Positions 613–728 (KHLLLAPSDV…AGEELFFDYR (116 aa)) constitute an SET domain.

Belongs to the class V-like SAM-binding methyltransferase superfamily. Histone-lysine methyltransferase family. EZ subfamily. As to quaternary structure, component of the PRC2/EED-EZH1 complex, which includes EED, EZH1, SUZ12, RBBP4 and AEBP2. The PRC2/EED-EZH1 is less abundant than the PRC2/EED-EZH2 complex, has weak methyltransferase activity and compacts chromatin in the absence of the methyltransferase cofactor S-adenosyl-L-methionine (SAM). Interacts with EZHIP; the interaction blocks EZH1 methyltransferase activity. Expressed at high levels in kidney, adrenal gland, testis and brain.

It is found in the nucleus. The catalysed reaction is L-lysyl(27)-[histone H3] + 3 S-adenosyl-L-methionine = N(6),N(6),N(6)-trimethyl-L-lysyl(27)-[histone H3] + 3 S-adenosyl-L-homocysteine + 3 H(+). Polycomb group (PcG) protein. Catalytic subunit of the PRC2/EED-EZH1 complex, which methylates 'Lys-27' of histone H3, leading to transcriptional repression of the affected target gene. Able to mono-, di- and trimethylate 'Lys-27' of histone H3 to form H3K27me1, H3K27me2 and H3K27me3, respectively. Required for embryonic stem cell derivation and self-renewal, suggesting that it is involved in safeguarding embryonic stem cell identity. Compared to EZH2-containing complexes, it is less abundant in embryonic stem cells, has weak methyltransferase activity and plays a less critical role in forming H3K27me3, which is required for embryonic stem cell identity and proper differentiation. This chain is Histone-lysine N-methyltransferase EZH1 (Ezh1), found in Mus musculus (Mouse).